We begin with the raw amino-acid sequence, 468 residues long: E3 ubiquitin-protein ligase RGLG2 (468 aa).

The disordered stretch occupies residues 1-89 (MGTGNSKENW…PSQSYGSDNK (89 aa)). Gly-2 carries the N-myristoyl glycine lipid modification. Residues 12–45 (QSSFRSTSASSASPSSSSWASQQSYPQYGAESYN) show a composition bias toward low complexity. A compositionally biased stretch (pro residues) spans 46–65 (YPPPPSYAQPPEYTQPPPPL). Low complexity predominate over residues 66-84 (YSTQPYSAPSYSAPPSQSY). The VWFA domain occupies 122–342 (NLIVGIDFTK…KETEFALSAL (221 aa)). The tract at residues 369 to 416 (FPLPPPMRGGSSSYNSPKPSRLPSFKPSVPPHPTEGYHVRSSPVPPPT) is disordered. An RING-type zinc finger spans residues 425 to 458 (CPICLSNPKDMAFGCGHQTCCECGPDLQMCPICR).

In terms of assembly, interacts with the heterodimer UBC35/UEV1B, UBC35 alone, PIN1, but not with UCB2, UCB9, UEV1B or UEV1C alone. Interacts with ERF053. Post-translationally, N-myristoylated. Ubiquitously expressed.

The protein localises to the cell membrane. It localises to the nucleus. The catalysed reaction is S-ubiquitinyl-[E2 ubiquitin-conjugating enzyme]-L-cysteine + [acceptor protein]-L-lysine = [E2 ubiquitin-conjugating enzyme]-L-cysteine + N(6)-ubiquitinyl-[acceptor protein]-L-lysine.. Its function is as follows. E3 ubiquitin-protein ligase that mediates the formation of 'Lys-63'-linked ubiquitin chains. Regulates apical dominance by acting on the auxin transport proteins abundance. Mediates ubiquitination and subsequent proteasomal degradation of ERF053 in response to drought stress. Acts as a negative regulator of drought stress response. The polypeptide is E3 ubiquitin-protein ligase RGLG2 (Arabidopsis thaliana (Mouse-ear cress)).